Reading from the N-terminus, the 430-residue chain is UDP-glucuronate 4-epimerase 3 (430 aa).

2 consecutive transmembrane segments (helical) span residues 29-49 (SVAK…IFFY) and 90-110 (GFSV…SAAL). 92–123 (SVLVTGAAGFVGTHVSAALKRRGDGVLGLDNF) is a binding site for NAD(+). Tyr242 serves as the catalytic Proton acceptor.

This sequence belongs to the NAD(P)-dependent epimerase/dehydratase family. Homodimer. As to expression, in roots, leaves, siliques, flowers, pollen and stems.

It localises to the golgi apparatus. The protein resides in the golgi stack membrane. The catalysed reaction is UDP-alpha-D-glucuronate = UDP-alpha-D-galacturonate. In terms of biological role, involved in the synthesis of the negatively charged monosaccharide that forms the backbone of pectic cell wall components. The protein is UDP-glucuronate 4-epimerase 3 (GAE3) of Arabidopsis thaliana (Mouse-ear cress).